Reading from the N-terminus, the 146-residue chain is Protein STIG1 (146 aa).

An N-terminal signal peptide occupies residues 1–23; that stretch reads MAFINLLILIILTLSSTPITTMS. N-linked (GlcNAc...) asparagine glycans are attached at residues Asn-31, Asn-61, and Asn-84.

Belongs to the STIG1 family. Glycosylated. Expressed exclusively in the stigmatic secretory zone.

The protein resides in the secreted. Involved in the temporal regulation of the exudate secretion onto the stigma. The polypeptide is Protein STIG1 (Nicotiana tabacum (Common tobacco)).